A 354-amino-acid chain; its full sequence is UDP-N-acetylglucosamine--N-acetylmuramyl-(pentapeptide) pyrophosphoryl-undecaprenol N-acetylglucosamine transferase (354 aa).

UDP-N-acetyl-alpha-D-glucosamine is bound by residues Thr15–Gly17, Asn127, Arg163, Ser191, Ile244, Ala263–Glu268, and Gln288.

This sequence belongs to the glycosyltransferase 28 family. MurG subfamily.

The protein resides in the cell inner membrane. It catalyses the reaction di-trans,octa-cis-undecaprenyl diphospho-N-acetyl-alpha-D-muramoyl-L-alanyl-D-glutamyl-meso-2,6-diaminopimeloyl-D-alanyl-D-alanine + UDP-N-acetyl-alpha-D-glucosamine = di-trans,octa-cis-undecaprenyl diphospho-[N-acetyl-alpha-D-glucosaminyl-(1-&gt;4)]-N-acetyl-alpha-D-muramoyl-L-alanyl-D-glutamyl-meso-2,6-diaminopimeloyl-D-alanyl-D-alanine + UDP + H(+). Its pathway is cell wall biogenesis; peptidoglycan biosynthesis. In terms of biological role, cell wall formation. Catalyzes the transfer of a GlcNAc subunit on undecaprenyl-pyrophosphoryl-MurNAc-pentapeptide (lipid intermediate I) to form undecaprenyl-pyrophosphoryl-MurNAc-(pentapeptide)GlcNAc (lipid intermediate II). This chain is UDP-N-acetylglucosamine--N-acetylmuramyl-(pentapeptide) pyrophosphoryl-undecaprenol N-acetylglucosamine transferase, found in Vibrio cholerae serotype O1 (strain ATCC 39315 / El Tor Inaba N16961).